Consider the following 278-residue polypeptide: Mediator of RNA polymerase II transcription subunit 18 (278 aa).

It belongs to the Mediator complex subunit 18 family. In terms of assembly, component of the Mediator complex.

It localises to the nucleus. Its function is as follows. Component of the Mediator complex, a coactivator involved in the regulated transcription of nearly all RNA polymerase II-dependent genes. Mediator functions as a bridge to convey information from gene-specific regulatory proteins to the basal RNA polymerase II transcription machinery. Mediator is recruited to promoters by direct interactions with regulatory proteins and serves as a scaffold for the assembly of a functional preinitiation complex with RNA polymerase II and the general transcription factors. This is Mediator of RNA polymerase II transcription subunit 18 (srb5) from Aspergillus clavatus (strain ATCC 1007 / CBS 513.65 / DSM 816 / NCTC 3887 / NRRL 1 / QM 1276 / 107).